Consider the following 1799-residue polypeptide: Bromodomain and WD repeat-containing protein 3 (1799 aa).

WD repeat units lie at residues 170-209 (IKMH…IWAT), 213-251 (RLLA…VWCL), 255-297 (APVA…FWQW), 307-347 (RPVK…IYYL), 353-393 (EKIA…IWQY), 400-452 (SIVL…VWNS), 456-495 (QLLH…IWDL), and 502-542 (RNYF…LFGF). At Ser693 the chain carries Phosphoserine. The disordered stretch occupies residues 766 to 912 (KKPSYPIQRN…KKKKGGLVSM (147 aa)). The span at 784 to 794 (SLRRTQRKRQH) shows a compositional bias: basic residues. Over residues 795–816 (TYLTRSNIEHNSQASSQTSGVQ) the composition is skewed to polar residues. Over residues 817–828 (EDSDSSSEEDET) the composition is skewed to acidic residues. The span at 845-858 (SESSSSDSSSEYSD) shows a compositional bias: low complexity. Residues 875–884 (RQATQKIYSS) show a composition bias toward polar residues. Residues Ser884 and Ser885 each carry the phosphoserine modification. Residues 897–907 (KKPKQTKKKKG) are compositionally biased toward basic residues. In terms of domain architecture, Bromo 1 spans 1136 to 1243 (WGAHSRDEEC…DVLLRFIGDQ (108 aa)). 4 disordered regions span residues 1258–1291 (EDPD…KCRG), 1321–1366 (EPFR…IDTP), 1435–1482 (IQSQ…QNTS), and 1517–1723 (SPSS…AKRA). Positions 1260 to 1276 (PDSSDLEEDSEMVDLDS) are enriched in acidic residues. Residues 1298 to 1427 (CNPDAWKKQC…ALFENHIKNI (130 aa)) enclose the Bromo 2 domain. The span at 1333–1348 (PVQQQQEGESSQSVPP) shows a compositional bias: low complexity. Basic residues predominate over residues 1438 to 1450 (QKRRRPRYRKRLR). 2 stretches are compositionally biased toward low complexity: residues 1451-1463 (SSSS…RAPS) and 1517-1530 (SPSS…SGNS). A phosphoserine mark is found at Ser1574 and Ser1576. Positions 1584-1596 (GEEKEMKETKEQV) are enriched in basic and acidic residues. Over residues 1598–1623 (LSSSESGELGSSLSSESTSGSDSDSE) the composition is skewed to low complexity. Basic and acidic residues predominate over residues 1624–1640 (STSRTDQDYVDGDHDYS). Composition is skewed to basic residues over residues 1646–1663 (RPKR…RNWK) and 1681–1694 (RGGR…RGGR). Residue Ser1760 is modified to Phosphoserine.

Plays a role in the regulation of cell morphology and cytoskeletal organization. Required in the control of cell shape. This chain is Bromodomain and WD repeat-containing protein 3 (Brwd3), found in Mus musculus (Mouse).